A 456-amino-acid chain; its full sequence is Kynurenine 3-monooxygenase (456 aa).

This sequence belongs to the aromatic-ring hydroxylase family. KMO subfamily. The cofactor is FAD.

The catalysed reaction is L-kynurenine + NADPH + O2 + H(+) = 3-hydroxy-L-kynurenine + NADP(+) + H2O. It participates in cofactor biosynthesis; NAD(+) biosynthesis; quinolinate from L-kynurenine: step 1/3. Functionally, catalyzes the hydroxylation of L-kynurenine (L-Kyn) to form 3-hydroxy-L-kynurenine (L-3OHKyn). Required for synthesis of quinolinic acid. This chain is Kynurenine 3-monooxygenase, found in Xanthomonas campestris pv. campestris (strain B100).